Reading from the N-terminus, the 358-residue chain is Phosphoserine aminotransferase (358 aa).

An L-glutamate-binding site is contributed by Arg41. Pyridoxal 5'-phosphate contacts are provided by residues 75–76 (AR), Trp101, Thr150, Asp170, and Gln193. Lys194 bears the N6-(pyridoxal phosphate)lysine mark. 235 to 236 (NT) is a binding site for pyridoxal 5'-phosphate.

It belongs to the class-V pyridoxal-phosphate-dependent aminotransferase family. SerC subfamily. Homodimer. The cofactor is pyridoxal 5'-phosphate.

It localises to the cytoplasm. It carries out the reaction O-phospho-L-serine + 2-oxoglutarate = 3-phosphooxypyruvate + L-glutamate. It catalyses the reaction 4-(phosphooxy)-L-threonine + 2-oxoglutarate = (R)-3-hydroxy-2-oxo-4-phosphooxybutanoate + L-glutamate. Its pathway is amino-acid biosynthesis; L-serine biosynthesis; L-serine from 3-phospho-D-glycerate: step 2/3. It functions in the pathway cofactor biosynthesis; pyridoxine 5'-phosphate biosynthesis; pyridoxine 5'-phosphate from D-erythrose 4-phosphate: step 3/5. Its function is as follows. Catalyzes the reversible conversion of 3-phosphohydroxypyruvate to phosphoserine and of 3-hydroxy-2-oxo-4-phosphonooxybutanoate to phosphohydroxythreonine. This Histophilus somni (strain 129Pt) (Haemophilus somnus) protein is Phosphoserine aminotransferase.